Consider the following 318-residue polypeptide: Putative olfactory receptor 2W6 (318 aa).

The Extracellular portion of the chain corresponds to 1-31 (MGFYHVGQAAFELLTSSFILVGFSDRPHLEL). A helical membrane pass occupies residues 32–52 (IVFVVVLIFYLLTLLGNMTIV). At 53-63 (LLSALDSRLHT) the chain is on the cytoplasmic side. Residues 64–84 (PMYFFLANLSFLDMCFTTGSI) form a helical membrane-spanning segment. Residues 85-103 (PQMLYNLWGPDKTISYVGC) are Extracellular-facing. Residues Cys-103 and Cys-185 are joined by a disulfide bond. A helical transmembrane segment spans residues 104-124 (AIQLYFVLALGGVECVLLAVM). The Cytoplasmic portion of the chain corresponds to 125-145 (AYDRYAAVCKPLHYTIIMHPR). The chain crosses the membrane as a helical span at residues 146–166 (LCGQLASVAWLSGFGNSLIMA). The Extracellular segment spans residues 167–202 (PQTLMLPRCGHRRVDHFLCEMPALIGMACVDTMMLE). The chain crosses the membrane as a helical span at residues 203 to 223 (ALAFALAIFIILAPLILILIS). At 224-245 (YGYVGGTVLRIKSAAGRKKAFN) the chain is on the cytoplasmic side. A helical membrane pass occupies residues 246–266 (TCSSHLIVVSLFYGTIIYMYL). Residues 267 to 277 (QPANTYSQDQG) are Extracellular-facing. Residues 278-298 (KFLTLFYTIVTPSVNPLIYTL) form a helical membrane-spanning segment. Residues 299 to 318 (RNKDVKEAMKKVLGKGSAEI) are Cytoplasmic-facing.

This sequence belongs to the G-protein coupled receptor 1 family.

Its subcellular location is the cell membrane. Functionally, odorant receptor. In Homo sapiens (Human), this protein is Putative olfactory receptor 2W6 (OR2W6P).